The primary structure comprises 680 residues: Chaperone protein dnaK3 (680 aa).

At Thr-205 the chain carries Phosphothreonine; by autocatalysis. The interval 640–680 (GRERRRDDDEDEWAEPPRTRRSRSYSQRADSAPWDDWDDDW) is disordered.

This sequence belongs to the heat shock protein 70 family.

Its function is as follows. Acts as a chaperone. The protein is Chaperone protein dnaK3 (dnaK3) of Thermosynechococcus vestitus (strain NIES-2133 / IAM M-273 / BP-1).